Here is a 954-residue protein sequence, read N- to C-terminus: Glycine dehydrogenase (decarboxylating) (954 aa).

Residue Lys-704 is modified to N6-(pyridoxal phosphate)lysine.

The protein belongs to the GcvP family. In terms of assembly, the glycine cleavage system is composed of four proteins: P, T, L and H. Requires pyridoxal 5'-phosphate as cofactor.

It carries out the reaction N(6)-[(R)-lipoyl]-L-lysyl-[glycine-cleavage complex H protein] + glycine + H(+) = N(6)-[(R)-S(8)-aminomethyldihydrolipoyl]-L-lysyl-[glycine-cleavage complex H protein] + CO2. In terms of biological role, the glycine cleavage system catalyzes the degradation of glycine. The P protein binds the alpha-amino group of glycine through its pyridoxal phosphate cofactor; CO(2) is released and the remaining methylamine moiety is then transferred to the lipoamide cofactor of the H protein. The chain is Glycine dehydrogenase (decarboxylating) from Vibrio vulnificus (strain YJ016).